A 218-amino-acid chain; its full sequence is Ribose-5-phosphate isomerase A (218 aa).

Substrate-binding positions include 28–31 (TGST), 81–84 (DGAD), and 94–97 (KGGG). The active-site Proton acceptor is the Glu103. Substrate is bound at residue Lys121.

Belongs to the ribose 5-phosphate isomerase family. Homodimer.

It carries out the reaction aldehydo-D-ribose 5-phosphate = D-ribulose 5-phosphate. Its pathway is carbohydrate degradation; pentose phosphate pathway; D-ribose 5-phosphate from D-ribulose 5-phosphate (non-oxidative stage): step 1/1. Its function is as follows. Catalyzes the reversible conversion of ribose-5-phosphate to ribulose 5-phosphate. This chain is Ribose-5-phosphate isomerase A, found in Vibrio campbellii (strain ATCC BAA-1116).